The sequence spans 526 residues: Cytochrome P450 monooxygenase 226 (526 aa).

Residues 15–35 (FATSYAALTVAAVTLLAALLV) form a helical membrane-spanning segment. N-linked (GlcNAc...) asparagine glycans are attached at residues N219, N277, and N320. C452 provides a ligand contact to heme.

The protein belongs to the cytochrome P450 family. Heme serves as cofactor.

It is found in the membrane. Its pathway is secondary metabolite biosynthesis. Cytochrome P450 monooxygenase that is able to use anthracene, carbazole and phenanthrene as substrates for oxidation. These multifunctional properties against a series of polycyclic aromatic hydrocarbons (PAHs) suggest that CYP226 would play important roles, at least in part, in fungal metabolic systems involved in xenobiotic detoxification. The chain is Cytochrome P450 monooxygenase 226 from Postia placenta (strain ATCC 44394 / Madison 698-R) (Brown rot fungus).